Here is a 249-residue protein sequence, read N- to C-terminus: Small ribosomal subunit protein uS2 (249 aa).

Belongs to the universal ribosomal protein uS2 family.

The sequence is that of Small ribosomal subunit protein uS2 from Polynucleobacter asymbioticus (strain DSM 18221 / CIP 109841 / QLW-P1DMWA-1) (Polynucleobacter necessarius subsp. asymbioticus).